Consider the following 384-residue polypeptide: Putative glutamate--cysteine ligase 2-1 (384 aa).

The protein belongs to the glutamate--cysteine ligase type 2 family. YbdK subfamily.

The enzyme catalyses L-cysteine + L-glutamate + ATP = gamma-L-glutamyl-L-cysteine + ADP + phosphate + H(+). Its function is as follows. ATP-dependent carboxylate-amine ligase which exhibits weak glutamate--cysteine ligase activity. This chain is Putative glutamate--cysteine ligase 2-1, found in Paenarthrobacter aurescens (strain TC1).